We begin with the raw amino-acid sequence, 236 residues long: Leucyl/phenylalanyl-tRNA--protein transferase (236 aa).

This sequence belongs to the L/F-transferase family.

The protein resides in the cytoplasm. The catalysed reaction is N-terminal L-lysyl-[protein] + L-leucyl-tRNA(Leu) = N-terminal L-leucyl-L-lysyl-[protein] + tRNA(Leu) + H(+). It carries out the reaction N-terminal L-arginyl-[protein] + L-leucyl-tRNA(Leu) = N-terminal L-leucyl-L-arginyl-[protein] + tRNA(Leu) + H(+). It catalyses the reaction L-phenylalanyl-tRNA(Phe) + an N-terminal L-alpha-aminoacyl-[protein] = an N-terminal L-phenylalanyl-L-alpha-aminoacyl-[protein] + tRNA(Phe). Its function is as follows. Functions in the N-end rule pathway of protein degradation where it conjugates Leu, Phe and, less efficiently, Met from aminoacyl-tRNAs to the N-termini of proteins containing an N-terminal arginine or lysine. The protein is Leucyl/phenylalanyl-tRNA--protein transferase of Shewanella sp. (strain MR-4).